The sequence spans 338 residues: 4-hydroxythreonine-4-phosphate dehydrogenase (338 aa).

Substrate is bound by residues His-140 and Thr-141. A divalent metal cation contacts are provided by His-172, His-217, and His-271. 3 residues coordinate substrate: Lys-279, Asn-288, and Arg-297.

This sequence belongs to the PdxA family. In terms of assembly, homodimer. The cofactor is a divalent metal cation.

It is found in the cytoplasm. It catalyses the reaction 4-(phosphooxy)-L-threonine + NAD(+) = 3-amino-2-oxopropyl phosphate + CO2 + NADH. It participates in cofactor biosynthesis; pyridoxine 5'-phosphate biosynthesis; pyridoxine 5'-phosphate from D-erythrose 4-phosphate: step 4/5. Functionally, catalyzes the NAD(P)-dependent oxidation of 4-(phosphooxy)-L-threonine (HTP) into 2-amino-3-oxo-4-(phosphooxy)butyric acid which spontaneously decarboxylates to form 3-amino-2-oxopropyl phosphate (AHAP). The sequence is that of 4-hydroxythreonine-4-phosphate dehydrogenase from Prosthecochloris aestuarii (strain DSM 271 / SK 413).